A 152-amino-acid chain; its full sequence is Snaclec agkisacutacin subunit A (152 aa).

Positions 1-23 (MGRFIFVSFGLLVVFLSLSGTAA) are cleaved as a signal peptide. The region spanning 24–152 (DCSSGWSSYE…EQQDPFVCEA (129 aa)) is the C-type lectin domain. Intrachain disulfides connect Cys-25/Cys-36, Cys-53/Cys-150, and Cys-125/Cys-142. Ca(2+) contacts are provided by Ser-64, Glu-66, and Glu-70. Glu-151 is a Ca(2+) binding site.

This sequence belongs to the snaclec family. As to quaternary structure, heterodimer with subunit B of AaACP or agkisacutacin; disulfide-linked. In terms of tissue distribution, expressed by the venom gland.

The protein localises to the secreted. In terms of biological role, anticoagulant protein which binds to the gamma-carboxyglutamic acid-domain regions of factors IX (F9) and factor X (F10) in the presence of calcium with a 1 to 1 stoichiometry. Also inhibits platelet aggregation by binding to platelet glycoprotein Ibalpha (GP1BA) and functioning as a blocker of von Willebrand factor (VWF). Is devoid of hemorrhagic and lethal activities. Possesses antithrombotic and thrombolytic activities. Also hydrolyzes the Aalpha-chain of fibrinogen (FGA). Does not affect the Bbeta-chain (FGB) and the gamma chain (FGG). This chain is Snaclec agkisacutacin subunit A, found in Deinagkistrodon acutus (Hundred-pace snake).